Consider the following 344-residue polypeptide: Methionine import ATP-binding protein MetN (344 aa).

One can recognise an ABC transporter domain in the interval 2–241; it reads IEIRNLSQRF…PHHEVTRALI (240 aa). 38 to 45 provides a ligand contact to ATP; sequence GRSGAGKS.

This sequence belongs to the ABC transporter superfamily. Methionine importer (TC 3.A.1.24) family. The complex is composed of two ATP-binding proteins (MetN), two transmembrane proteins (MetI) and a solute-binding protein (MetQ).

It is found in the cell inner membrane. The enzyme catalyses L-methionine(out) + ATP + H2O = L-methionine(in) + ADP + phosphate + H(+). It carries out the reaction D-methionine(out) + ATP + H2O = D-methionine(in) + ADP + phosphate + H(+). In terms of biological role, part of the ABC transporter complex MetNIQ involved in methionine import. Responsible for energy coupling to the transport system. This is Methionine import ATP-binding protein MetN from Burkholderia thailandensis (strain ATCC 700388 / DSM 13276 / CCUG 48851 / CIP 106301 / E264).